The following is a 102-amino-acid chain: Large ribosomal subunit protein bL21 (102 aa).

Belongs to the bacterial ribosomal protein bL21 family. As to quaternary structure, part of the 50S ribosomal subunit. Contacts protein L20.

Functionally, this protein binds to 23S rRNA in the presence of protein L20. This Cytophaga hutchinsonii (strain ATCC 33406 / DSM 1761 / CIP 103989 / NBRC 15051 / NCIMB 9469 / D465) protein is Large ribosomal subunit protein bL21.